The primary structure comprises 1588 residues: Ubiquitin carboxyl-terminal hydrolase 54 (1588 aa).

Residue arginine 12 is modified to Omega-N-methylarginine. Residues 31–352 (KGLSNEPGQN…QPLLLLYADP (322 aa)) enclose the USP domain. Cysteine 42 acts as the Nucleophile in catalysis. 12 residues coordinate Zn(2+): histidine 67, cysteine 69, cysteine 74, cysteine 77, histidine 133, cysteine 145, cysteine 150, histidine 153, cysteine 166, cysteine 169, cysteine 225, and cysteine 229. The Proton acceptor role is filled by histidine 302. Composition is skewed to basic and acidic residues over residues 382 to 391 (GHLTDSECNQ) and 424 to 434 (SEGETLKEKQA). Disordered regions lie at residues 382–519 (GHLT…PTWR), 555–577 (FTPDEVSKPTANDIKDGGSRSQH), and 601–624 (ESGYESSERNSSSPVSLDAAPPDS). Residue serine 424 is modified to Phosphoserine. Residues 453 to 471 (TVSNMIHSRPSLASQTSAG) show a composition bias toward polar residues. A compositionally biased stretch (low complexity) spans 499-513 (TESTSSEAKSSSSSK). Basic and acidic residues predominate over residues 555 to 572 (FTPDEVSKPTANDIKDGG). Over residues 601–616 (ESGYESSERNSSSPVS) the composition is skewed to low complexity. Serine 613 and serine 616 each carry phosphoserine. Positions 682–712 (ELDELQEEVVRRAQEQELRKKREKELEAAKG) form a coiled coil. 4 disordered regions span residues 801–834 (RSLQDRMQQQASSQQPVQPSASLPSQGGALPQPT), 1089–1182 (QNTS…PDMY), 1221–1242 (SQVKPSAPGPGDKSSSHDSHPR), and 1491–1561 (WGNL…RSPG). Over residues 808–826 (QQQASSQQPVQPSASLPSQ) the composition is skewed to low complexity. Residues 1126 to 1147 (GREHCRWVKQPRSPDGRERPPC) show a composition bias toward basic and acidic residues. Position 1138 is a phosphoserine (serine 1138). The segment covering 1510 to 1524 (PSSNLHVPLRSTWNS) has biased composition (polar residues). Over residues 1536 to 1547 (RRIDMPPDDDWR) the composition is skewed to basic and acidic residues.

This sequence belongs to the peptidase C19 family.

It carries out the reaction Thiol-dependent hydrolysis of ester, thioester, amide, peptide and isopeptide bonds formed by the C-terminal Gly of ubiquitin (a 76-residue protein attached to proteins as an intracellular targeting signal).. Deubiquitinase that specifically mediates 'Lys-63'-linked deubiquitination of substrates with a polyubiquitin chain composed of at least 3 ubiquitins. Specifically recognizes ubiquitin chain in position S2 and catalyzes cleavage of polyubiquitin within 'Lys-63'-linked chains. Not able to deubiquitinate substrates with shorter ubiquitin chains. Mediates deubiquitination of PLK4, maintaining PLK4 stability by reducing its ubiquitination-mediated degradation. The polypeptide is Ubiquitin carboxyl-terminal hydrolase 54 (Usp54) (Mus musculus (Mouse)).